Consider the following 338-residue polypeptide: 2-oxoglutarate-dependent dioxygenase ecdG (338 aa).

The Fe2OG dioxygenase domain maps to 165–273 (PSVTNLGFLR…KYTLAYFVRP (109 aa)). The Fe cation site is built by histidine 190, aspartate 192, and histidine 249. Lysine 264 contacts 2-oxoglutarate.

Belongs to the iron/ascorbate-dependent oxidoreductase family. It depends on Fe(2+) as a cofactor.

It participates in antifungal biosynthesis. 2-oxoglutarate-dependent dioxygenase; part of the gene cluster that mediates the biosynthesis of echinocandin B, a fungal lipidated cyclic hexapeptide that acts as an antifungal agent. Linoleoyl-AMP, produced by the fatty-acyl-AMP ligase ecdI, is transferred to the initiation carrier domain (T0) of ecdA. The linoleoyl-S-phosphopantetheinyl-T0 is sequentially extended with L-ornithine, L-threonine, L-proline, L-homotyrosine, L-threonine, and 4R-methyl-L-proline to form the linear hexapeptide. Thereafter, the terminal condensation (C7) performs macrocyclization of the NRPS product and the cyclic scaffold is released from ecdA. All six of the amino acid residues are hydroxylated, including 4R,5R-dihydroxy-L-ornithine, 4R-hydroxyl-L-proline, 3S,4S-dihydroxy-L-homotyrosine, and 3S-hydroxyl-4S-methyl-L-prolin. In the pathway, all the hydroxylation reactions are proposed to occur following completion of the cyclic peptide, so the unhydroxylated precursor produced by ecdA will undergo six rounds of hydroxylation. Five hydroxylase genes (ecdG, ecdH, ecdK, htyE and htyF) are embedded within the echinocandin B (ecd) and L-homotyrosine (hty) clusters. In Aspergillus rugulosus (Emericella rugulosa), this protein is 2-oxoglutarate-dependent dioxygenase ecdG.